We begin with the raw amino-acid sequence, 158 residues long: Transcription elongation factor GreA (158 aa).

Positions 14-76 (VKKLEEELEY…QIENMLKNAN (63 aa)) form a coiled coil.

This sequence belongs to the GreA/GreB family.

Its function is as follows. Necessary for efficient RNA polymerase transcription elongation past template-encoded arresting sites. The arresting sites in DNA have the property of trapping a certain fraction of elongating RNA polymerases that pass through, resulting in locked ternary complexes. Cleavage of the nascent transcript by cleavage factors such as GreA or GreB allows the resumption of elongation from the new 3'terminus. GreA releases sequences of 2 to 3 nucleotides. The chain is Transcription elongation factor GreA from Clostridium acetobutylicum (strain ATCC 824 / DSM 792 / JCM 1419 / IAM 19013 / LMG 5710 / NBRC 13948 / NRRL B-527 / VKM B-1787 / 2291 / W).